A 429-amino-acid chain; its full sequence is Phosphomethylpyrimidine synthase (429 aa).

Substrate-binding positions include Asn-66, Met-95, Tyr-124, His-163, 185-187, 226-229, and Glu-265; these read SRG and DGLR. His-269 lines the Zn(2+) pocket. Tyr-292 serves as a coordination point for substrate. His-333 contributes to the Zn(2+) binding site. Residues Cys-407, Cys-410, and Cys-414 each contribute to the [4Fe-4S] cluster site.

Belongs to the ThiC family. [4Fe-4S] cluster is required as a cofactor.

It carries out the reaction 5-amino-1-(5-phospho-beta-D-ribosyl)imidazole + S-adenosyl-L-methionine = 4-amino-2-methyl-5-(phosphooxymethyl)pyrimidine + CO + 5'-deoxyadenosine + formate + L-methionine + 3 H(+). It functions in the pathway cofactor biosynthesis; thiamine diphosphate biosynthesis. Functionally, catalyzes the synthesis of the hydroxymethylpyrimidine phosphate (HMP-P) moiety of thiamine from aminoimidazole ribotide (AIR) in a radical S-adenosyl-L-methionine (SAM)-dependent reaction. The protein is Phosphomethylpyrimidine synthase of Pyrococcus abyssi (strain GE5 / Orsay).